The chain runs to 1610 residues: NHS-like protein 1 (1610 aa).

A Phosphoserine modification is found at Ser24. The interval 145 to 169 (SPFCDDYQDEDEETDQKCSLSSSEE) is disordered. 2 positions are modified to phosphoserine: Ser198 and Ser328. Over residues 433–448 (TAQSAGQRESKSSGSS) the composition is skewed to polar residues. Disordered regions lie at residues 433–477 (TAQS…HWNE) and 531–602 (PAHP…DAGS). Phosphoserine is present on Ser568. The segment covering 578–594 (GYSTPTSNMSSCSLDQT) has biased composition (polar residues). A Phosphoserine modification is found at Ser639. The span at 649–667 (QKNQGDRSNYQDKSLSRNI) shows a compositional bias: polar residues. Disordered stretches follow at residues 649–693 (QKNQ…KKSS), 715–778 (SLPG…SVKS), 791–981 (TGMQ…PPPE), 997–1535 (PRPA…GEGE), and 1566–1610 (EGGL…SEES). Residues 715 to 730 (SLPGKSGSSPSQSPCS) show a composition bias toward low complexity. Polar residues-rich tracts occupy residues 740 to 760 (SRSQSTVSAGSSMTSATTPNV), 767 to 778 (TPSQSDTSSVKS), and 851 to 865 (SPSSGYSSQSNTPTA). Low complexity predominate over residues 895–928 (SLISSVSISSSSTSLSSSTSTEGSGTMKKLDPAV). Pro residues-rich tracts occupy residues 929 to 946 (GSPPAPPPPPVPSPPFPC) and 970 to 981 (PHSPVFPPPPPE). A compositionally biased stretch (low complexity) spans 1001 to 1011 (LSPILPDSPVS). Residues 1012–1031 (LPLPPPLLPSSEPPPAPPLD) are compositionally biased toward pro residues. The span at 1041–1053 (PFTNSGQPESSRG) shows a compositional bias: polar residues. Residue Ser1089 is modified to Phosphoserine. Positions 1122-1153 (SRNSTNEMESESQPASVTSSLPTPAKSSSQGD) are enriched in polar residues. Phosphoserine is present on Ser1167. A compositionally biased stretch (low complexity) spans 1180–1193 (PSPSTTPLPDSSPS). Ser1233 is modified (phosphoserine). Composition is skewed to basic and acidic residues over residues 1240–1249 (GSVHSREAKE) and 1373–1383 (GRRDSDDDHSR). Phosphoserine occurs at positions 1386 and 1388. Position 1392 is a phosphothreonine (Thr1392). Polar residues predominate over residues 1405–1422 (QVGSIQRSIRKSSTSSDN). Residues 1447 to 1460 (KNTDPRFQRSRSEP) show a composition bias toward basic and acidic residues. Low complexity-rich tracts occupy residues 1461 to 1474 (SPDAPESPSSCSPS) and 1504 to 1516 (SRTPPSAASSRYS).

The protein belongs to the NHS family. As to expression, widely expressed. Expressed in adult and fetal brain, fetal eyes, adult lens, kidney, liver and intestine.

This chain is NHS-like protein 1 (NHSL1), found in Homo sapiens (Human).